We begin with the raw amino-acid sequence, 1377 residues long: DNA-directed RNA polymerase subunit beta (1377 aa).

The protein belongs to the RNA polymerase beta chain family. In terms of assembly, the RNAP catalytic core consists of 2 alpha, 1 beta, 1 beta' and 1 omega subunit. When a sigma factor is associated with the core the holoenzyme is formed, which can initiate transcription.

The catalysed reaction is RNA(n) + a ribonucleoside 5'-triphosphate = RNA(n+1) + diphosphate. DNA-dependent RNA polymerase catalyzes the transcription of DNA into RNA using the four ribonucleoside triphosphates as substrates. The chain is DNA-directed RNA polymerase subunit beta from Brucella suis biovar 1 (strain 1330).